Here is a 326-residue protein sequence, read N- to C-terminus: Methyltransferase phqN (326 aa).

Belongs to the class I-like SAM-binding methyltransferase superfamily. Erg6/SMT family.

It functions in the pathway alkaloid biosynthesis. Its function is as follows. Methyltransferase; part of the gene cluster that mediates the biosynthesis of paraherquamide, a fungal indole alkaloid that belongs to a family of natural products containing a characteristic bicyclo[2.2.2]diazaoctane core. The first steps in the biosynthesis of paraherquamide is the production of the beta-methyl-proline precursor from L-isoleucine. They require oxidation of a terminally hydroxylated L-isoleucine to the corresponding aldehyde by enzymes which have still to be identified. Spontaneous cyclization and dehydration would yield the 4-methyl pyrolline-5-carboxylic acid, which is then reduced by the pyrroline-5-carboxylate reductase phqD leading to the beta-methyl-proline precursor. The next step of paraherquamide biosynthesis involves coupling of beta-methyl-proline and L-tryptophan by the bimodular NRPS phqB, to produce a monooxopiperazine intermediate. The reductase (R) domain of phqB utilizes NADPH for hydride transfer to reduce the thioester bond of the T domain-tethered linear dipeptide to a hemithioaminal intermediate, which spontaneously cleaves the C-S bond to release the aldehyde product. This compound undergoes spontaneous cyclization and dehydration to give a dienamine which is reverse prenylated at C-2 by the reverse prenyltransferase phqJ. The other prenyltransferase present in the cluster, phqI may be a redundant gene in the pathway. During biosynthetic assembly, the key step to produce the polycyclic core is catalyzed by the bifunctional reductase and intramolecular [4+2] Diels-Alderase, phqE, resulting in formation of the [2.2.2] diazaoctane intermediate preparaherquamide. Following formation of preparaherquamide, an indole 2,3-epoxidation-initiated pinacol-like rearrangement is catalyzed by the phqK FAD-dependent monooxygenase. The prenyltransferase phqA, the cytochrome P450 monooxygenase phqL, and the FAD-linked oxidoreductase phqH (or the cytochrome P450 monooxygenase phqM), are proposed to be involved in the formation of the pyran ring. The FAD-dependent monooxygenase phqK is likely responsible for generation of the spiro-oxindole, and the N-methylation is likely mediated by the phqN methyltransferase leading to the isolable natural product paraherquamide F. However, the order of these biosynthetic steps has still to be determined. In late-stage paraherquamide biosynthesis, the third P450 monooxygenase, phqO, is probably responsible for the C-14 hydroxylation, transforming paraherquamide F to paraherquamide G, and paraherquamide E to the final product paraherquamide A. The expansion from the 6-membered ring pyran (in paraherquamides F and G) to the 7-membered dioxepin ring (in paraherquamides A and E) represents a poorly understood but intriguing process that probably involves the 2-oxoglutarate-dependent dioxygenase phqC. Finally, the remaining members of the paraherquamide cluster, including phqI as well as phqM (or phqH), do not have a clearly prescribed role and appear to be redundant. This is Methyltransferase phqN from Penicillium fellutanum.